We begin with the raw amino-acid sequence, 234 residues long: Triosephosphate isomerase (234 aa).

Asn8 to Lys10 contacts substrate. His90 serves as the catalytic Electrophile. Glu159 (proton acceptor) is an active-site residue. Substrate-binding residues include Gly165 and Ser197.

This sequence belongs to the triosephosphate isomerase family. Homodimer.

The protein localises to the cytoplasm. The catalysed reaction is D-glyceraldehyde 3-phosphate = dihydroxyacetone phosphate. The protein operates within carbohydrate biosynthesis; gluconeogenesis. It participates in carbohydrate degradation; glycolysis; D-glyceraldehyde 3-phosphate from glycerone phosphate: step 1/1. Functionally, involved in the gluconeogenesis. Catalyzes stereospecifically the conversion of dihydroxyacetone phosphate (DHAP) to D-glyceraldehyde-3-phosphate (G3P). This Helicobacter pylori (strain G27) protein is Triosephosphate isomerase.